The sequence spans 215 residues: Disulfide-bond oxidoreductase YfcG (215 aa).

A GST N-terminal domain is found at 1-87 (MIDLYFAPTP…YLAEKTGLFL (87 aa)). Glutathione-binding positions include Asn-11, Gln-38, Arg-40, Ile-52, 71–72 (ES), and Arg-132. Positions 90–215 (ETRERAATLQ…AQLGDERSDS (126 aa)) constitute a GST C-terminal domain.

It belongs to the GST superfamily. Nu-class GSH transferase family. In terms of assembly, homodimer.

In terms of biological role, exhibits a very robust glutathione (GSH)-dependent disulfide-bond reductase activity toward the model substrate, 2-hydroxyethyl disulfide; the actual physiological substrates are not known. Also has a low GSH-dependent hydroperoxidase activity toward cumene hydroperoxide, but does not reduce H(2)O(2), tert-butyl hydroperoxide, benzyl peroxide, or lauroyl peroxide. Exhibits little or no GSH transferase activity with most typical electrophilic substrates, and has no detectable transferase activity using glutathionylspermidine (GspSH) as the nucleophilic substrate. Is involved in defense against oxidative stress, probably via its peroxidase activity. This is Disulfide-bond oxidoreductase YfcG (yfcG) from Escherichia coli (strain K12).